Reading from the N-terminus, the 454-residue chain is uncharacterized protein (454 aa).

Residues 422–454 (EWLPPAHLDHGQPRTNSYFHPEKLLHDSDEDDP) are disordered.

This sequence belongs to the Rv1128c/1148c/1588c/1702c/1945/3466 family.

This is an uncharacterized protein from Mycobacterium tuberculosis (strain CDC 1551 / Oshkosh).